We begin with the raw amino-acid sequence, 283 residues long: 4-diphosphocytidyl-2-C-methyl-D-erythritol kinase (283 aa).

Residue Lys10 is part of the active site. 99–109 (PMGGGLGGGSS) contributes to the ATP binding site. Asp141 is an active-site residue.

This sequence belongs to the GHMP kinase family. IspE subfamily. In terms of assembly, homodimer.

The catalysed reaction is 4-CDP-2-C-methyl-D-erythritol + ATP = 4-CDP-2-C-methyl-D-erythritol 2-phosphate + ADP + H(+). It participates in isoprenoid biosynthesis; isopentenyl diphosphate biosynthesis via DXP pathway; isopentenyl diphosphate from 1-deoxy-D-xylulose 5-phosphate: step 3/6. In terms of biological role, catalyzes the phosphorylation of the position 2 hydroxy group of 4-diphosphocytidyl-2C-methyl-D-erythritol. This chain is 4-diphosphocytidyl-2-C-methyl-D-erythritol kinase, found in Salmonella paratyphi C (strain RKS4594).